Consider the following 453-residue polypeptide: MRECISIHIGQAGIQVGNACWELYCLEHGIQPNGQMPADNTTGGGDDAFNTFFSETGAGKHVPRAVYVDLEPTVCDEVRTGSYRQLYHPEQIISGKEDAANNYARGHYTIGKEIVDIVLDRIRKLSDNCTGLQGFLVFHATGGGTGSGLGSLLLERLSVDYGRKSKLSFAITPAPQVATAVVEPYNSVLSTHALLEHTDCTFCLDNEALYDVCRRNLDIERPTYTNLNRLVAQVISSLTASLRFDGALNVDVTEFQTNLVPYPRIHFMLTSYAPIISAEKAYHEQLSVAEITNSVFEPAGMMTKCDPRHGKYMACCLMYRGDVVPKDVNAAVATIKTKRTIQFVDWCPTGFKCGINYQPPTAVPGGDLARVQRAVCMVANTTAIAEALSRIDHKFDLMYAKRAFVHWYVGEGMEEGEFSEAREDLVALEKDYEEVGAETADGDGEEEEFGEEY.

GTP-binding residues include Gln-11, Glu-71, Gly-144, Thr-145, Thr-179, Asn-206, and Asn-228. Residue Glu-71 coordinates Mg(2+). Glu-254 is an active-site residue. Residues 433 to 453 form a disordered region; that stretch reads EEVGAETADGDGEEEEFGEEY.

Belongs to the tubulin family. In terms of assembly, dimer of alpha and beta chains. A typical microtubule is a hollow water-filled tube with an outer diameter of 25 nm and an inner diameter of 15 nM. Alpha-beta heterodimers associate head-to-tail to form protofilaments running lengthwise along the microtubule wall with the beta-tubulin subunit facing the microtubule plus end conferring a structural polarity. Microtubules usually have 13 protofilaments but different protofilament numbers can be found in some organisms and specialized cells. It depends on Mg(2+) as a cofactor. Undergoes a tyrosination/detyrosination cycle, the cyclic removal and re-addition of a C-terminal tyrosine residue by the enzymes tubulin tyrosine carboxypeptidase (TTCP) and tubulin tyrosine ligase (TTL), respectively.

Its subcellular location is the cytoplasm. It localises to the cytoskeleton. It carries out the reaction GTP + H2O = GDP + phosphate + H(+). Tubulin is the major constituent of microtubules, a cylinder consisting of laterally associated linear protofilaments composed of alpha- and beta-tubulin heterodimers. Microtubules grow by the addition of GTP-tubulin dimers to the microtubule end, where a stabilizing cap forms. Below the cap, tubulin dimers are in GDP-bound state, owing to GTPase activity of alpha-tubulin. This Pelvetia fastigiata (Brown alga) protein is Tubulin alpha-1 chain (TUBA1).